A 286-amino-acid chain; its full sequence is Probable endonuclease LCL3 (286 aa).

The segment at 1–29 (MSGSYSPQKDPQHPTQHQQFPPTPPYPSS) is disordered. The chain crosses the membrane as a helical span at residues 41–61 (VFIGIGSAAGASALTLLGVMG). The region spanning 84–243 (AWIKGIVTSV…RDAKRGLWAL (160 aa)) is the TNase-like domain. Residue arginine 133 is part of the active site. Residue aspartate 138 coordinates Ca(2+). Residues glutamate 141 and arginine 181 contribute to the active site.

The protein belongs to the LCL3 family.

The protein localises to the mitochondrion. The protein resides in the membrane. This Cryptococcus gattii serotype B (strain WM276 / ATCC MYA-4071) (Filobasidiella gattii) protein is Probable endonuclease LCL3 (LCL3).